Consider the following 77-residue polypeptide: Translation initiation factor IF-1, chloroplastic (77 aa).

The region spanning 1–71 is the S1-like domain; it reads MKEQKWIHEG…TRGRIIYRLR (71 aa).

Belongs to the IF-1 family. In terms of assembly, component of the 30S ribosomal translation pre-initiation complex which assembles on the 30S ribosome in the order IF-2 and IF-3, IF-1 and N-formylmethionyl-tRNA(fMet); mRNA recruitment can occur at any time during PIC assembly.

Its subcellular location is the plastid. It is found in the chloroplast. Its function is as follows. One of the essential components for the initiation of protein synthesis. Stabilizes the binding of IF-2 and IF-3 on the 30S subunit to which N-formylmethionyl-tRNA(fMet) subsequently binds. Helps modulate mRNA selection, yielding the 30S pre-initiation complex (PIC). Upon addition of the 50S ribosomal subunit IF-1, IF-2 and IF-3 are released leaving the mature 70S translation initiation complex. This chain is Translation initiation factor IF-1, chloroplastic, found in Spinacia oleracea (Spinach).